Reading from the N-terminus, the 666-residue chain is Magnesium-chelatase 67 kDa subunit (666 aa).

37-44 (GRRGTGKT) lines the ATP pocket. Residues 327-367 (LPDEEEQMQPPPPPPPPPPPPEPDKPDDPETPPDEAPKDEQ) are disordered. The span at 335 to 347 (QPPPPPPPPPPPP) shows a compositional bias: pro residues. The VWFA domain maps to 475–661 (LIIFVVDASG…SLAETVKSGV (187 aa)).

It belongs to the Mg-chelatase subunits D/I family.

It carries out the reaction protoporphyrin IX + Mg(2+) + ATP + H2O = Mg-protoporphyrin IX + ADP + phosphate + 3 H(+). It functions in the pathway porphyrin-containing compound metabolism; bacteriochlorophyll biosynthesis. In terms of biological role, involved in bacteriochlorophyll biosynthesis; introduces a magnesium ion into protoporphyrin IX to yield Mg-protoporphyrin IX. This chain is Magnesium-chelatase 67 kDa subunit (bchD), found in Heliobacterium mobile (Heliobacillus mobilis).